A 427-amino-acid polypeptide reads, in one-letter code: 3-phosphoshikimate 1-carboxyvinyltransferase (427 aa).

Residues K20, S21, and R25 each coordinate 3-phosphoshikimate. Position 20 (K20) interacts with phosphoenolpyruvate. G92 and R120 together coordinate phosphoenolpyruvate. 4 residues coordinate 3-phosphoshikimate: S166, Q168, D312, and K339. Q168 contributes to the phosphoenolpyruvate binding site. D312 acts as the Proton acceptor in catalysis. Phosphoenolpyruvate is bound by residues R343 and R385.

It belongs to the EPSP synthase family. In terms of assembly, monomer.

The protein resides in the cytoplasm. The catalysed reaction is 3-phosphoshikimate + phosphoenolpyruvate = 5-O-(1-carboxyvinyl)-3-phosphoshikimate + phosphate. The protein operates within metabolic intermediate biosynthesis; chorismate biosynthesis; chorismate from D-erythrose 4-phosphate and phosphoenolpyruvate: step 6/7. Its function is as follows. Catalyzes the transfer of the enolpyruvyl moiety of phosphoenolpyruvate (PEP) to the 5-hydroxyl of shikimate-3-phosphate (S3P) to produce enolpyruvyl shikimate-3-phosphate and inorganic phosphate. The polypeptide is 3-phosphoshikimate 1-carboxyvinyltransferase (Streptococcus pyogenes serotype M49 (strain NZ131)).